The primary structure comprises 420 residues: UDP-N-acetyl-D-mannosamine dehydrogenase (420 aa).

Residues Y13, I14, D33, T85, and T126 each contribute to the NAD(+) site. UDP-N-acetyl-alpha-D-mannosaminouronate-binding residues include R160, V161, K212, N216, R219, H250, R252, and G263. The Proton donor/acceptor role is filled by K212. C266 serves as the catalytic Nucleophile. Residues F330 and K331 each coordinate UDP-N-acetyl-alpha-D-mannosaminouronate. R338 is a binding site for NAD(+). UDP-N-acetyl-alpha-D-mannosaminouronate is bound at residue K416.

This sequence belongs to the UDP-glucose/GDP-mannose dehydrogenase family. WecC subfamily. Homodimer.

It carries out the reaction UDP-N-acetyl-alpha-D-mannosamine + 2 NAD(+) + H2O = UDP-N-acetyl-alpha-D-mannosaminouronate + 2 NADH + 3 H(+). It participates in bacterial outer membrane biogenesis; enterobacterial common antigen biosynthesis. Its function is as follows. Catalyzes the four-electron oxidation of UDP-N-acetyl-D-mannosamine (UDP-ManNAc), reducing NAD(+) and releasing UDP-N-acetylmannosaminuronic acid (UDP-ManNAcA). The polypeptide is UDP-N-acetyl-D-mannosamine dehydrogenase (Salmonella typhi).